The following is a 203-amino-acid chain: Ribosome biogenesis protein RLP24 (203 aa).

The disordered stretch occupies residues 147–203 (RKAAKENAMDEEIEDEEEEIASEDMMSEDEEMESESEAESTKQKVVLKNKKKSKRSN). A compositionally biased stretch (acidic residues) spans 155-184 (MDEEIEDEEEEIASEDMMSEDEEMESESEA). A compositionally biased stretch (basic residues) spans 191-203 (VVLKNKKKSKRSN).

This sequence belongs to the eukaryotic ribosomal protein eL24 family. As to quaternary structure, associated with nucleolar and cytoplasmic pre-60S particles. At the end of biogenesis it dissociates from cytoplasmic pre-60S particles and is likely to be exchanged for its ribosomal homolog, RPL24.

It is found in the cytoplasm. The protein resides in the nucleus. Involved in the biogenesis of the 60S ribosomal subunit. Ensures the docking of DEHA2D15950g/NOG1 to pre-60S particles. Activates and recruits ATPase AFG2 to cytoplasmic pre-60S ribosomal particles. This Debaryomyces hansenii (strain ATCC 36239 / CBS 767 / BCRC 21394 / JCM 1990 / NBRC 0083 / IGC 2968) (Yeast) protein is Ribosome biogenesis protein RLP24 (RLP24).